We begin with the raw amino-acid sequence, 209 residues long: Uracil phosphoribosyltransferase (209 aa).

5-phospho-alpha-D-ribose 1-diphosphate contacts are provided by residues Arg79, Arg104, and 131–139 (DPMLATGGS). Uracil is bound by residues Ile194 and 199 to 201 (GDA). Asp200 is a 5-phospho-alpha-D-ribose 1-diphosphate binding site.

Belongs to the UPRTase family. It depends on Mg(2+) as a cofactor.

It carries out the reaction UMP + diphosphate = 5-phospho-alpha-D-ribose 1-diphosphate + uracil. The protein operates within pyrimidine metabolism; UMP biosynthesis via salvage pathway; UMP from uracil: step 1/1. Allosterically activated by GTP. In terms of biological role, catalyzes the conversion of uracil and 5-phospho-alpha-D-ribose 1-diphosphate (PRPP) to UMP and diphosphate. This is Uracil phosphoribosyltransferase from Clostridium perfringens (strain SM101 / Type A).